Reading from the N-terminus, the 163-residue chain is Nucleotide-binding protein BCG9842_B4128 (163 aa).

It belongs to the YajQ family.

In terms of biological role, nucleotide-binding protein. The protein is Nucleotide-binding protein BCG9842_B4128 of Bacillus cereus (strain G9842).